A 25-amino-acid chain; its full sequence is Alpha-amylase inhibitor (25 aa).

As to quaternary structure, monomer or homodimer. In terms of processing, may exist both in a glycosylated and in an unglycosylated form.

It is found in the secreted. In terms of biological role, inhibits alpha-amylases but not trypsin. Is more effective against insect alpha-amylases than those of mammals. This chain is Alpha-amylase inhibitor, found in Secale cereale (Rye).